The primary structure comprises 326 residues: NDRG-like protein (326 aa).

It belongs to the NDRG family.

The chain is NDRG-like protein from Dictyostelium discoideum (Social amoeba).